Consider the following 157-residue polypeptide: Transcriptional repressor NrdR (157 aa).

The segment at 3 to 34 (CPFCRHPDSRVVDSRTSDDGLSIRRRRQCPEC) is a zinc-finger region. The ATP-cone domain occupies 46 to 136 (LSVIKRNGVV…VYQGFDSLDD (91 aa)).

Belongs to the NrdR family. Requires Zn(2+) as cofactor.

Its function is as follows. Negatively regulates transcription of bacterial ribonucleotide reductase nrd genes and operons by binding to NrdR-boxes. The sequence is that of Transcriptional repressor NrdR from Clavibacter sepedonicus (Clavibacter michiganensis subsp. sepedonicus).